Consider the following 25-residue polypeptide: Ribosome-inactivating protein charantin (25 aa).

In terms of assembly, monomer.

It catalyses the reaction Endohydrolysis of the N-glycosidic bond at one specific adenosine on the 28S rRNA.. Its function is as follows. Inhibits cell-free translation in a rabbit reticulocyte lysate system. The polypeptide is Ribosome-inactivating protein charantin (Momordica charantia (Bitter gourd)).